Here is a 443-residue protein sequence, read N- to C-terminus: Xaa-Pro dipeptidase (443 aa).

The Mn(2+) site is built by Asp-246, Asp-257, His-339, Glu-384, and Glu-423.

It belongs to the peptidase M24B family. Bacterial-type prolidase subfamily. Mn(2+) is required as a cofactor.

The enzyme catalyses Xaa-L-Pro dipeptide + H2O = an L-alpha-amino acid + L-proline. Functionally, splits dipeptides with a prolyl residue in the C-terminal position. The sequence is that of Xaa-Pro dipeptidase from Escherichia coli O157:H7.